We begin with the raw amino-acid sequence, 310 residues long: Aspartate carbamoyltransferase catalytic subunit (310 aa).

Residues Arg55 and Thr56 each contribute to the carbamoyl phosphate site. Position 83 (Lys83) interacts with L-aspartate. Carbamoyl phosphate contacts are provided by Arg105, His136, and Gln139. Arg169 and Arg223 together coordinate L-aspartate. The carbamoyl phosphate site is built by Gly264 and Pro265.

The protein belongs to the aspartate/ornithine carbamoyltransferase superfamily. ATCase family. Heterododecamer (2C3:3R2) of six catalytic PyrB chains organized as two trimers (C3), and six regulatory PyrI chains organized as three dimers (R2).

The enzyme catalyses carbamoyl phosphate + L-aspartate = N-carbamoyl-L-aspartate + phosphate + H(+). Its pathway is pyrimidine metabolism; UMP biosynthesis via de novo pathway; (S)-dihydroorotate from bicarbonate: step 2/3. Its function is as follows. Catalyzes the condensation of carbamoyl phosphate and aspartate to form carbamoyl aspartate and inorganic phosphate, the committed step in the de novo pyrimidine nucleotide biosynthesis pathway. The polypeptide is Aspartate carbamoyltransferase catalytic subunit (Saccharopolyspora erythraea (strain ATCC 11635 / DSM 40517 / JCM 4748 / NBRC 13426 / NCIMB 8594 / NRRL 2338)).